The following is a 157-amino-acid chain: UPF0179 protein Mhun_1135 (157 aa).

It belongs to the UPF0179 family.

The chain is UPF0179 protein Mhun_1135 from Methanospirillum hungatei JF-1 (strain ATCC 27890 / DSM 864 / NBRC 100397 / JF-1).